Here is a 157-residue protein sequence, read N- to C-terminus: Crossover junction endodeoxyribonuclease RuvC (157 aa).

Active-site residues include Asp-7, Glu-67, and Asp-140. The Mg(2+) site is built by Asp-7, Glu-67, and Asp-140.

It belongs to the RuvC family. Homodimer which binds Holliday junction (HJ) DNA. The HJ becomes 2-fold symmetrical on binding to RuvC with unstacked arms; it has a different conformation from HJ DNA in complex with RuvA. In the full resolvosome a probable DNA-RuvA(4)-RuvB(12)-RuvC(2) complex forms which resolves the HJ. Mg(2+) serves as cofactor.

Its subcellular location is the cytoplasm. The enzyme catalyses Endonucleolytic cleavage at a junction such as a reciprocal single-stranded crossover between two homologous DNA duplexes (Holliday junction).. The RuvA-RuvB-RuvC complex processes Holliday junction (HJ) DNA during genetic recombination and DNA repair. Endonuclease that resolves HJ intermediates. Cleaves cruciform DNA by making single-stranded nicks across the HJ at symmetrical positions within the homologous arms, yielding a 5'-phosphate and a 3'-hydroxyl group; requires a central core of homology in the junction. The consensus cleavage sequence is 5'-(A/T)TT(C/G)-3'. Cleavage occurs on the 3'-side of the TT dinucleotide at the point of strand exchange. HJ branch migration catalyzed by RuvA-RuvB allows RuvC to scan DNA until it finds its consensus sequence, where it cleaves and resolves the cruciform DNA. The protein is Crossover junction endodeoxyribonuclease RuvC of Rickettsia massiliae (strain Mtu5).